Consider the following 351-residue polypeptide: Translation initiation factor eIF2B subunit beta (351 aa).

Belongs to the eIF-2B alpha/beta/delta subunits family. As to quaternary structure, component of the translation initiation factor 2B (eIF2B) complex which is a heterodecamer of two sets of five different subunits: alpha, beta, gamma, delta and epsilon. Subunits alpha, beta and delta comprise a regulatory subcomplex and subunits epsilon and gamma comprise a catalytic subcomplex. Within the complex, the hexameric regulatory complex resides at the center, with the two heterodimeric catalytic subcomplexes bound on opposite sides.

The protein localises to the cytoplasm. The protein resides in the cytosol. Its activity is regulated as follows. Activated by the chemical integrated stress response (ISR) inhibitor ISRIB which stimulates guanine nucleotide exchange factor activity for both phosphorylated and unphosphorylated eIF2. Acts as a component of the translation initiation factor 2B (eIF2B) complex, which catalyzes the exchange of GDP for GTP on eukaryotic initiation factor 2 (eIF2) gamma subunit. Its guanine nucleotide exchange factor activity is repressed when bound to eIF2 complex phosphorylated on the alpha subunit, thereby limiting the amount of methionyl-initiator methionine tRNA available to the ribosome and consequently global translation is repressed. This Homo sapiens (Human) protein is Translation initiation factor eIF2B subunit beta (EIF2B2).